The chain runs to 241 residues: Caffeoyl-CoA O-methyltransferase (241 aa).

Methionine 1 carries the post-translational modification Blocked amino end (Met). Lysine 15 is a binding site for substrate. S-adenosyl-L-methionine is bound by residues threonine 57, glutamate 79, 81-82 (GV), serine 87, aspartate 105, and alanine 134. Aspartate 157 serves as a coordination point for substrate. Aspartate 157 is a binding site for a divalent metal cation. Aspartate 159 is an S-adenosyl-L-methionine binding site. Positions 183 and 184 each coordinate a divalent metal cation. Asparagine 188 provides a ligand contact to substrate.

The protein belongs to the class I-like SAM-binding methyltransferase superfamily. Cation-dependent O-methyltransferase family. CCoAMT subfamily. In terms of assembly, homodimer. It depends on a divalent metal cation as a cofactor. Roots and leaves.

The enzyme catalyses (E)-caffeoyl-CoA + S-adenosyl-L-methionine = (E)-feruloyl-CoA + S-adenosyl-L-homocysteine + H(+). Its pathway is aromatic compound metabolism; phenylpropanoid biosynthesis. Functionally, methylates caffeoyl-CoA to feruloyl-CoA and 5-hydroxyferuloyl-CoA to sinapoyl-CoA. Plays a role in the synthesis of feruloylated polysaccharides. Involved in the reinforcement of the plant cell wall. Also involved in the responding to wounding or pathogen challenge by the increased formation of cell wall-bound ferulic acid polymers. This chain is Caffeoyl-CoA O-methyltransferase, found in Petroselinum crispum (Parsley).